The following is a 920-amino-acid chain: Translation initiation factor IF-2 (920 aa).

The tract at residues 33 to 305 is disordered; it reads KSASSTVEAP…RGRKSKRAKR (273 aa). Residues 53 to 86 show a composition bias toward low complexity; the sequence is SKSAPAPAKSAGNGATAAPATSATPATAAAAAAP. Composition is skewed to pro residues over residues 87–159, 179–193, and 201–212; these read APAP…PAPR, PRPQ…PGTP, and NMPPRPAGPRPG. A compositionally biased stretch (gly residues) spans 225–291; sequence PGGRGPGGGG…GAAGAFGRPG (67 aa). Positions 295–304 are enriched in basic residues; the sequence is KRGRKSKRAK. The 173-residue stretch at 416-588 folds into the tr-type G domain; that stretch reads IRPPVVTVMG…VLLTADASLD (173 aa). Positions 425–432 are G1; it reads GHVDHGKT. 425–432 is a binding site for GTP; the sequence is GHVDHGKT. The segment at 450–454 is G2; that stretch reads GITQH. Residues 475 to 478 are G3; the sequence is DTPG. GTP is bound by residues 475–479 and 529–532; these read DTPGH and NKID. Positions 529–532 are G4; it reads NKID. The segment at 565–567 is G5; sequence SAK.

This sequence belongs to the TRAFAC class translation factor GTPase superfamily. Classic translation factor GTPase family. IF-2 subfamily.

It is found in the cytoplasm. Functionally, one of the essential components for the initiation of protein synthesis. Protects formylmethionyl-tRNA from spontaneous hydrolysis and promotes its binding to the 30S ribosomal subunits. Also involved in the hydrolysis of GTP during the formation of the 70S ribosomal complex. The chain is Translation initiation factor IF-2 from Mycobacterium sp. (strain JLS).